The primary structure comprises 373 residues: D-alanine--D-alanine ligase (373 aa).

Positions 156–363 (KKLLAAEGLP…YPTLLAAMVD (208 aa)) constitute an ATP-grasp domain. Position 184 to 239 (184 to 239 (RERLGLPVFVKPARGGSSIGVSRVTAWDELPAAVALARRHDPKVIVEAAVIGRELE)) interacts with ATP. Mg(2+) is bound by residues aspartate 318, glutamate 330, and asparagine 332.

It belongs to the D-alanine--D-alanine ligase family. Mg(2+) serves as cofactor. Requires Mn(2+) as cofactor.

The protein localises to the cytoplasm. The catalysed reaction is 2 D-alanine + ATP = D-alanyl-D-alanine + ADP + phosphate + H(+). The protein operates within cell wall biogenesis; peptidoglycan biosynthesis. Functionally, cell wall formation. The protein is D-alanine--D-alanine ligase of Mycolicibacterium smegmatis (strain ATCC 700084 / mc(2)155) (Mycobacterium smegmatis).